Reading from the N-terminus, the 995-residue chain is MTNCVPLSFVQSCVGHRGAARFFHSRLYKNRLDKDVYLCNNLINAYLETGDSVSARKVFDEMPLRNCVSWACIVSGYSRNGEHKEALVFLRDMVKEGIFSNQYAFVSVLRACQEIGSVGILFGRQIHGLMFKLSYAVDAVVSNVLISMYWKCIGSVGYALCAFGDIEVKNSVSWNSIISVYSQAGDQRSAFRIFSSMQYDGSRPTEYTFGSLVTTACSLTEPDVRLLEQIMCTIQKSGLLTDLFVGSGLVSAFAKSGSLSYARKVFNQMETRNAVTLNGLMVGLVRQKWGEEATKLFMDMNSMIDVSPESYVILLSSFPEYSLAEEVGLKKGREVHGHVITTGLVDFMVGIGNGLVNMYAKCGSIADARRVFYFMTDKDSVSWNSMITGLDQNGCFIEAVERYKSMRRHDILPGSFTLISSLSSCASLKWAKLGQQIHGESLKLGIDLNVSVSNALMTLYAETGYLNECRKIFSSMPEHDQVSWNSIIGALARSERSLPEAVVCFLNAQRAGQKLNRITFSSVLSAVSSLSFGELGKQIHGLALKNNIADEATTENALIACYGKCGEMDGCEKIFSRMAERRDNVTWNSMISGYIHNELLAKALDLVWFMLQTGQRLDSFMYATVLSAFASVATLERGMEVHACSVRACLESDVVVGSALVDMYSKCGRLDYALRFFNTMPVRNSYSWNSMISGYARHGQGEEALKLFETMKLDGQTPPDHVTFVGVLSACSHAGLLEEGFKHFESMSDSYGLAPRIEHFSCMADVLGRAGELDKLEDFIEKMPMKPNVLIWRTVLGACCRANGRKAELGKKAAEMLFQLEPENAVNYVLLGNMYAAGGRWEDLVKARKKMKDADVKKEAGYSWVTMKDGVHMFVAGDKSHPDADVIYKKLKELNRKMRDAGYVPQTGFALYDLEQENKEEILSYHSEKLAVAFVLAAQRSSTLPIRIMKNLRVCGDCHSAFKYISKIEGRQIILRDSNRFHHFQDGACSCSDFW.

PPR repeat units follow at residues 35–65 (DVYL…MPLR), 66–100 (NCVS…GIFS), 101–137 (NQYA…SYAV), 138–169 (DAVV…IEVK), 170–204 (NSVS…GSRP), 205–241 (TEYT…GLLT), 242–276 (DLFV…NAVT), 278–303 (NGLM…MNSM), 307–342 (SPES…VITT), 348–378 (MVGI…MTDK), 379–413 (DSVS…DILP), 414–448 (GSFT…GIDL), 449–483 (NVSV…DQVS), 484–515 (WNSI…GQKL), 516–550 (NRIT…NIAD), 551–581 (EATT…MAER), 583–617 (DNVT…GQRL), 618–652 (DSFM…CLES), 653–683 (DVVV…MPVR), 684–718 (NSYS…GQTP), 720–750 (DHVT…MSDS), and 756–786 (RIEH…MPMK). The tract at residues 791–868 (IWRTVLGACC…EAGYSWVTMK (78 aa)) is type E motif. Residues 869 to 899 (DGVHMFVAGDKSHPDADVIYKKLKELNRKMR) are type E(+) motif. The segment at 900–995 (DAGYVPQTGF…DGACSCSDFW (96 aa)) is type DYW motif.

The protein belongs to the PPR family. PCMP-H subfamily.

The chain is Putative pentatricopeptide repeat-containing protein At5g09950 (PCMP-H35) from Arabidopsis thaliana (Mouse-ear cress).